A 432-amino-acid polypeptide reads, in one-letter code: Ciliated left-right organizer protein containing ZP-N domains homolog (432 aa).

As to expression, expressed specifically by cells of the ciliated left-right organizer.

The chain is Ciliated left-right organizer protein containing ZP-N domains homolog (ciroz) from Danio rerio (Zebrafish).